Reading from the N-terminus, the 294-residue chain is MNNQASRLDNLMNIKNPKSFFDNKGNTKFIAITSGKGGVGKSNISANLAYSLYKKGYKVGVFDADIGLANLDVIFGVKTHKNILHALKGEAKLQEIICEIEPGLCLIPGDSGEEILKYISGAEALDQFVDEEGVLSSLDYIVVDTGAGIGATTQAFLNASDCVVIVTTPDPSAITDAYACIKINSKNKDELFLIANMVAQPKEGRATYERLFKVAKNNIASLELHYLGAIENSSLLKRYVRERKILRKIAPNDLFSQSIDQIAGLLVSKLETGALEIPKEGLKSFFKRLLKYLG.

35–42 (GKGGVGKS) contacts ATP.

This sequence belongs to the ParA family.

Functionally, involved in the placement and assembly of flagella. The chain is Flagellum site-determining protein YlxH (ylxH) from Helicobacter pylori (strain ATCC 700392 / 26695) (Campylobacter pylori).